A 1946-amino-acid chain; its full sequence is Chromodomain-helicase-DNA-binding protein 5 (1946 aa).

Disordered regions lie at residues Met1–Leu140, Val236–Lys272, and Ser285–Tyr340. Composition is skewed to acidic residues over residues Glu17–Glu37 and Asn72–Gly90. Basic residues-rich tracts occupy residues Thr96–Lys118 and Gly254–Lys272. Acidic residues predominate over residues Ser293–Leu303. Positions Lys323–Lys332 are enriched in basic residues. PHD-type zinc fingers lie at residues Gln345–Glu392 and Met418–Pro465. A histone-binding region spans residues Gln345–Ala655. In terms of domain architecture, Chromo 1 spans Met499 to Phe556. The disordered stretch occupies residues Asp551 to Lys573. The span at Glu563–Lys573 shows a compositional bias: basic and acidic residues. Residues Met594–Ala655 form the Chromo 2 domain. One can recognise a Helicase ATP-binding domain in the interval Arg714 to Glu898. ATP is bound at residue Asp727–Thr734. Positions Asp849–His852 match the DEAH box motif. The region spanning Leu1030–Leu1195 is the Helicase C-terminal domain. Disordered stretches follow at residues Met1210 to Ser1254, Tyr1353 to Leu1413, Lys1525 to Gly1566, Asp1579 to Asn1696, and Ser1926 to Phe1946. Residues Ser1212 to Gly1230 are compositionally biased toward polar residues. 2 stretches are compositionally biased toward acidic residues: residues Ser1357–Ser1368 and Ser1378–Glu1387. Gln1392 carries the post-translational modification N5-methylglutamine. Over residues Thr1551 to Pro1564 the composition is skewed to pro residues. A Phosphoserine modification is found at Ser1556. 3 stretches are compositionally biased toward basic and acidic residues: residues Asp1602–Lys1629, Pro1637–Glu1654, and Gly1661–Gly1676.

It belongs to the SNF2/RAD54 helicase family. Component of the nucleosome remodeling and deacetylase (NuRD) repressor complex, composed of core proteins MTA1, MTA2, MTA3, RBBP4, RBBP7, HDAC1, HDAC2, MBD2, MBD3, and peripherally associated proteins CDK2AP1, CDK2AP2, GATAD2A, GATAD2B, CHD3, CHD4 and CHD5. The exact stoichiometry of the NuRD complex is unknown, and some subunits such as MBD2 and MBD3, GATAD2A and GATAD2B, and CHD3, CHD4 and CHD5 define mutually exclusive NuRD complexes. Interacts with HDAC2. In terms of processing, methylated at Gln-1392 by N6AMT1. In terms of tissue distribution, specifically expressed by neurons in brain, retina and adrenal gland (at protein level). Also detected in testis.

It localises to the nucleus. The protein resides in the chromosome. It carries out the reaction ATP + H2O = ADP + phosphate + H(+). Its function is as follows. ATP-dependent chromatin-remodeling factor that binds DNA through histones and regulates gene transcription. May specifically recognize and bind trimethylated 'Lys-27' (H3K27me3) and non-methylated 'Lys-4' of histone H3. Acts as a component of the histone deacetylase NuRD complex which participates in the remodeling of chromatin. Plays a role in the development of the nervous system by activating the expression of genes promoting neuron terminal differentiation. In parallel, it may also positively regulate the trimethylation of histone H3 at 'Lys-27' thereby specifically repressing genes that promote the differentiation into non-neuronal cell lineages. Regulates the expression of genes involved in cell proliferation and differentiation. Downstream activated genes may include CDKN2A that positively regulates the p53/TP53 pathway, which in turn, prevents cell proliferation. In spermatogenesis, it probably regulates histone hyperacetylation and the replacement of histones by transition proteins in chromatin, a crucial step in the condensation of spermatid chromatin and the production of functional spermatozoa. The sequence is that of Chromodomain-helicase-DNA-binding protein 5 (Chd5) from Mus musculus (Mouse).